Consider the following 225-residue polypeptide: Protein ZW2 (225 aa).

A DOG1 domain is found at 7 to 225; sequence SETFASFFND…FYLRLRDLGV (219 aa).

Its function is as follows. May be involved in the regulation of abscisic acid (ABA) sensitivity. This Arabidopsis thaliana (Mouse-ear cress) protein is Protein ZW2.